A 585-amino-acid polypeptide reads, in one-letter code: SLAIN motif-containing protein-like (585 aa).

Disordered regions lie at residues 1-34, 55-125, 324-365, 402-476, and 492-585; these read MVVPDSGSDIQPADNGDTDKVMSNSEPELDPNLT, NQTL…RVEE, QDYA…EDEC, PRLS…SDGQ, and GSMS…DGCY. Over residues 68–83 the composition is skewed to polar residues; sequence GGTNNSNLKAGSNINN. The span at 327–345 shows a compositional bias: low complexity; the sequence is ASTSASRRSSSASLQSLRR. Acidic residues predominate over residues 351-365; it reads QEFDSYSQEDEEDEC. Polar residues-rich tracts occupy residues 425–434, 441–476, and 549–563; these read PNLTPRTSLR, NSRSMEANLQSSGNRTSCLPHSPKGASSSRMRSDGQ, and ASPSSRTRLPQTPRS. Basic and acidic residues predominate over residues 575 to 585; that stretch reads LTDESWKDGCY.

It belongs to the SLAIN motif-containing family.

This is SLAIN motif-containing protein-like from Danio rerio (Zebrafish).